We begin with the raw amino-acid sequence, 239 residues long: 3-dehydroquinate dehydratase (239 aa).

3-dehydroquinate-binding positions include E35–R37 and R70. The active-site Proton donor/acceptor is H133. K160 acts as the Schiff-base intermediate with substrate in catalysis. 3-dehydroquinate contacts are provided by R202 and Q225.

It belongs to the type-I 3-dehydroquinase family. As to quaternary structure, homodimer.

The enzyme catalyses 3-dehydroquinate = 3-dehydroshikimate + H2O. Its pathway is metabolic intermediate biosynthesis; chorismate biosynthesis; chorismate from D-erythrose 4-phosphate and phosphoenolpyruvate: step 3/7. In terms of biological role, involved in the third step of the chorismate pathway, which leads to the biosynthesis of aromatic amino acids. Catalyzes the cis-dehydration of 3-dehydroquinate (DHQ) and introduces the first double bond of the aromatic ring to yield 3-dehydroshikimate. The polypeptide is 3-dehydroquinate dehydratase (Staphylococcus saprophyticus subsp. saprophyticus (strain ATCC 15305 / DSM 20229 / NCIMB 8711 / NCTC 7292 / S-41)).